Consider the following 89-residue polypeptide: Small ribosomal subunit protein bS20 (89 aa).

Disordered stretches follow at residues 1–25 and 69–89; these read MANI…ASMK and KNAA…IQAS. The segment covering 7 to 20 has biased composition (basic residues); it reads AIKRAKTSEKRRAH.

This sequence belongs to the bacterial ribosomal protein bS20 family.

Its function is as follows. Binds directly to 16S ribosomal RNA. This Geobacillus thermodenitrificans (strain NG80-2) protein is Small ribosomal subunit protein bS20.